The chain runs to 229 residues: PKHD-type hydroxylase RPA3479 (229 aa).

The Fe2OG dioxygenase domain maps to 78-180; the sequence is QIFPPLFNRY…RVASFFWLQS (103 aa). Fe cation contacts are provided by H98, D100, and H161. 2-oxoglutarate is bound at residue R171.

It depends on Fe(2+) as a cofactor. Requires L-ascorbate as cofactor.

This chain is PKHD-type hydroxylase RPA3479, found in Rhodopseudomonas palustris (strain ATCC BAA-98 / CGA009).